The sequence spans 342 residues: Phosphate acyltransferase (342 aa).

Belongs to the PlsX family. As to quaternary structure, homodimer. Probably interacts with PlsY.

It localises to the cytoplasm. It catalyses the reaction a fatty acyl-[ACP] + phosphate = an acyl phosphate + holo-[ACP]. It functions in the pathway lipid metabolism; phospholipid metabolism. Catalyzes the reversible formation of acyl-phosphate (acyl-PO(4)) from acyl-[acyl-carrier-protein] (acyl-ACP). This enzyme utilizes acyl-ACP as fatty acyl donor, but not acyl-CoA. The sequence is that of Phosphate acyltransferase from Shewanella baltica (strain OS155 / ATCC BAA-1091).